The sequence spans 160 residues: SsrA-binding protein (160 aa).

This sequence belongs to the SmpB family.

Its subcellular location is the cytoplasm. Functionally, required for rescue of stalled ribosomes mediated by trans-translation. Binds to transfer-messenger RNA (tmRNA), required for stable association of tmRNA with ribosomes. tmRNA and SmpB together mimic tRNA shape, replacing the anticodon stem-loop with SmpB. tmRNA is encoded by the ssrA gene; the 2 termini fold to resemble tRNA(Ala) and it encodes a 'tag peptide', a short internal open reading frame. During trans-translation Ala-aminoacylated tmRNA acts like a tRNA, entering the A-site of stalled ribosomes, displacing the stalled mRNA. The ribosome then switches to translate the ORF on the tmRNA; the nascent peptide is terminated with the 'tag peptide' encoded by the tmRNA and targeted for degradation. The ribosome is freed to recommence translation, which seems to be the essential function of trans-translation. This chain is SsrA-binding protein, found in Nocardia farcinica (strain IFM 10152).